A 590-amino-acid polypeptide reads, in one-letter code: DELLA protein GAI1 (590 aa).

The segment covering Met1–His10 has biased composition (basic residues). The tract at residues Met1–Pro28 is disordered. The short motif at Asp35–Ala39 is the DELLA motif element. Positions His153–Ala182 are disordered. In terms of domain architecture, GRAS spans Val205 to Gln575. The tract at residues Ile212–Ile266 is leucine repeat I (LRI). The VHIID stretch occupies residues Gln284 to Gly349. The VHIID signature appears at Val315 to Asp319. The tract at residues Glu363 to Ser395 is leucine repeat II (LRII). The segment at Val405–Asn496 is PFYRE. An LXXLL motif motif is present at residues Leu413–Leu417. The tract at residues Ala499 to Gln575 is SAW.

This sequence belongs to the GRAS family. DELLA subfamily. Post-translationally, phosphorylated. In terms of processing, ubiquitinated. Upon GA application it is ubiquitinated, leading to its subsequent degradation.

The protein localises to the nucleus. Its function is as follows. Probable transcriptional regulator that acts as a repressor of the gibberellin (GA) signaling pathway. Probably acts by participating in large multiprotein complexes that repress transcription of GA-inducible genes. Upon GA application, it is degraded by the proteasome, allowing the GA signaling pathway. This chain is DELLA protein GAI1 (GAI1), found in Vitis vinifera (Grape).